The chain runs to 101 residues: Large ribosomal subunit protein bL27 (101 aa).

The disordered stretch occupies residues 1 to 21 (MAHKKAGGSSRNGRDSRSKRL).

Belongs to the bacterial ribosomal protein bL27 family.

The chain is Large ribosomal subunit protein bL27 from Buchnera aphidicola subsp. Cinara cedri (strain Cc).